Reading from the N-terminus, the 715-residue chain is Elongation factor G (715 aa).

The tr-type G domain occupies 8–290 (NRYRNIGICA…AVIDFLPAPT (283 aa)). Residues 17 to 24 (AHVDAGKT), 88 to 92 (DTPGH), and 142 to 145 (NKMD) each bind GTP.

It belongs to the TRAFAC class translation factor GTPase superfamily. Classic translation factor GTPase family. EF-G/EF-2 subfamily.

Its subcellular location is the cytoplasm. In terms of biological role, catalyzes the GTP-dependent ribosomal translocation step during translation elongation. During this step, the ribosome changes from the pre-translocational (PRE) to the post-translocational (POST) state as the newly formed A-site-bound peptidyl-tRNA and P-site-bound deacylated tRNA move to the P and E sites, respectively. Catalyzes the coordinated movement of the two tRNA molecules, the mRNA and conformational changes in the ribosome. The protein is Elongation factor G of Ectopseudomonas mendocina (strain ymp) (Pseudomonas mendocina).